A 173-amino-acid polypeptide reads, in one-letter code: Disulfide bond formation protein B (173 aa).

The Cytoplasmic segment spans residues 1 to 16 (MRILSSLKTFSQSRLS). The helical transmembrane segment at 17–33 (WLLLLAFVVFFTLCAMY) threads the bilayer. Over 34–51 (FQHVMLLAPCVMCIYERI) the chain is Periplasmic. A disulfide bridge connects residues C43 and C46. A helical transmembrane segment spans residues 52–67 (AMLGIGVAALIGAIAP). Topologically, residues 68 to 74 (QNPVVRW) are cytoplasmic. A helical membrane pass occupies residues 75-92 (LGFAAWGASSYKGLMLAI). Residues 93-147 (EHVNYQFNPSPFATCDLFVTFPAWAPLNQWAPNLFEAYGDCSKVVWQFLTLSMPQ) lie on the Periplasmic side of the membrane. Residues C107 and C133 are joined by a disulfide bond. A helical transmembrane segment spans residues 148 to 166 (WLVVIFAANLLALAIFVVA). At 167–173 (QLAKTSR) the chain is on the cytoplasmic side.

This sequence belongs to the DsbB family.

The protein resides in the cell inner membrane. In terms of biological role, required for disulfide bond formation in some periplasmic proteins. Acts by oxidizing the DsbA protein. This Vibrio cholerae serotype O1 (strain ATCC 39315 / El Tor Inaba N16961) protein is Disulfide bond formation protein B.